The chain runs to 157 residues: Nascent polypeptide-associated complex subunit beta-1 (157 aa).

Disordered regions lie at residues 19-42 (KVGGTRRKLNKKAGSSAGANKDDT) and 126-157 (EKHEAKAPADAEKKDEAIPELVEGQTFDADVE). The NAC-A/B domain occupies 38–103 (NKDDTKLQSQ…PQEKNLQDLF (66 aa)). Residues 126–142 (EKHEAKAPADAEKKDEA) show a composition bias toward basic and acidic residues. At Thr-151 the chain carries Phosphothreonine.

It belongs to the NAC-beta family. Part of the nascent polypeptide-associated complex (NAC), consisting of EGD2 and either EGD1 or BTT1. NAC associates with ribosomes via EGD1 or BTT1, and with the CCR4-NOT complex.

The protein resides in the cytoplasm. It is found in the nucleus. In terms of biological role, component of the nascent polypeptide-associated complex (NAC), a dynamic component of the ribosomal exit tunnel, protecting the emerging polypeptides from interaction with other cytoplasmic proteins to ensure appropriate nascent protein targeting. The NAC complex also promotes mitochondrial protein import by enhancing productive ribosome interactions with the outer mitochondrial membrane and blocks the inappropriate interaction of ribosomes translating non-secretory nascent polypeptides with translocation sites in the membrane of the endoplasmic reticulum. EGD1 may act as a transcription factor that exert a negative effect on the expression of several genes that are transcribed by RNA polymerase II. This Saccharomyces cerevisiae (strain YJM789) (Baker's yeast) protein is Nascent polypeptide-associated complex subunit beta-1 (EGD1).